A 290-amino-acid polypeptide reads, in one-letter code: Ribosomal RNA small subunit methyltransferase A (290 aa).

S-adenosyl-L-methionine is bound by residues Asn-28, Leu-30, Gly-55, Glu-76, Asp-102, and Asn-126.

The protein belongs to the class I-like SAM-binding methyltransferase superfamily. rRNA adenine N(6)-methyltransferase family. RsmA subfamily.

The protein resides in the cytoplasm. It carries out the reaction adenosine(1518)/adenosine(1519) in 16S rRNA + 4 S-adenosyl-L-methionine = N(6)-dimethyladenosine(1518)/N(6)-dimethyladenosine(1519) in 16S rRNA + 4 S-adenosyl-L-homocysteine + 4 H(+). In terms of biological role, specifically dimethylates two adjacent adenosines (A1518 and A1519) in the loop of a conserved hairpin near the 3'-end of 16S rRNA in the 30S particle. May play a critical role in biogenesis of 30S subunits. This is Ribosomal RNA small subunit methyltransferase A from Lachnoclostridium phytofermentans (strain ATCC 700394 / DSM 18823 / ISDg) (Clostridium phytofermentans).